An 810-amino-acid polypeptide reads, in one-letter code: Lon protease (810 aa).

Residues 32 to 226 form the Lon N-terminal domain; that stretch reads LPAIAMRSNM…RILDILARET (195 aa). Residue 376–383 coordinates ATP; sequence GPPGVGKT. The region spanning 612–791 is the Lon proteolytic domain; sequence KPMIGVTTGL…EEVLEVALNE (180 aa). Residues S697 and K740 contribute to the active site.

It belongs to the peptidase S16 family. In terms of assembly, homohexamer. Organized in a ring with a central cavity.

The protein localises to the cytoplasm. The catalysed reaction is Hydrolysis of proteins in presence of ATP.. Its function is as follows. ATP-dependent serine protease that mediates the selective degradation of mutant and abnormal proteins as well as certain short-lived regulatory proteins. Required for cellular homeostasis and for survival from DNA damage and developmental changes induced by stress. Degrades polypeptides processively to yield small peptide fragments that are 5 to 10 amino acids long. Binds to DNA in a double-stranded, site-specific manner. The polypeptide is Lon protease (Fervidobacterium nodosum (strain ATCC 35602 / DSM 5306 / Rt17-B1)).